Consider the following 160-residue polypeptide: Transcriptional repressor NrdR (160 aa).

A zinc finger spans residues 3–34 (CPFCGNADTQVVDSRVSEEGDTIRRRRRCLSC). One can recognise an ATP-cone domain in the interval 49–139 (PSVVKRDGSR…VYKSFEDIGE (91 aa)).

The protein belongs to the NrdR family. It depends on Zn(2+) as a cofactor.

Its function is as follows. Negatively regulates transcription of bacterial ribonucleotide reductase nrd genes and operons by binding to NrdR-boxes. This is Transcriptional repressor NrdR from Bordetella bronchiseptica (strain ATCC BAA-588 / NCTC 13252 / RB50) (Alcaligenes bronchisepticus).